A 178-amino-acid polypeptide reads, in one-letter code: Arginine repressor (178 aa).

The interval 1-21 (MSQAQENEHAGPAVPQTRTAR) is disordered.

It belongs to the ArgR family.

Its subcellular location is the cytoplasm. The protein operates within amino-acid biosynthesis; L-arginine biosynthesis [regulation]. Its function is as follows. Regulates arginine biosynthesis genes. This Streptomyces avermitilis (strain ATCC 31267 / DSM 46492 / JCM 5070 / NBRC 14893 / NCIMB 12804 / NRRL 8165 / MA-4680) protein is Arginine repressor.